The sequence spans 355 residues: Ribosomal RNA small subunit methyltransferase H (355 aa).

S-adenosyl-L-methionine-binding positions include Gly-55–His-57, Asp-75, Asp-122, and Gln-129. The disordered stretch occupies residues Glu-327–Arg-355.

It belongs to the methyltransferase superfamily. RsmH family.

It localises to the cytoplasm. It catalyses the reaction cytidine(1402) in 16S rRNA + S-adenosyl-L-methionine = N(4)-methylcytidine(1402) in 16S rRNA + S-adenosyl-L-homocysteine + H(+). In terms of biological role, specifically methylates the N4 position of cytidine in position 1402 (C1402) of 16S rRNA. This Bordetella avium (strain 197N) protein is Ribosomal RNA small subunit methyltransferase H.